The primary structure comprises 223 residues: RNA pyrophosphohydrolase (223 aa).

A Nudix hydrolase domain is found at 6-149 (GFRPNVGIIL…KRGVYEMALT (144 aa)). The Nudix box motif lies at 38–59 (GGIDRGESPEQAMFRELHEEVG). A disordered region spans residues 175 to 223 (ERHMPDGGAPAGLDLPPGGSFDPHPDITSASDDPSPPPHNKAPFLPSQR). Positions 180-193 (DGGAPAGLDLPPGG) are enriched in low complexity.

It belongs to the Nudix hydrolase family. RppH subfamily. A divalent metal cation serves as cofactor.

Functionally, accelerates the degradation of transcripts by removing pyrophosphate from the 5'-end of triphosphorylated RNA, leading to a more labile monophosphorylated state that can stimulate subsequent ribonuclease cleavage. This is RNA pyrophosphohydrolase from Variovorax paradoxus (strain S110).